The following is a 705-amino-acid chain: DNA ligase (705 aa).

NAD(+) contacts are provided by residues 42–46 (DADFD), 91–92 (SL), and E125. K127 acts as the N6-AMP-lysine intermediate in catalysis. NAD(+) contacts are provided by R148, E183, K299, and K323. 4 residues coordinate Zn(2+): C428, C431, C446, and C452. The BRCT domain occupies 626 to 705 (TDGSPVAGKT…DGWLALIEGL (80 aa)).

It belongs to the NAD-dependent DNA ligase family. LigA subfamily. Mg(2+) is required as a cofactor. Requires Mn(2+) as cofactor.

It carries out the reaction NAD(+) + (deoxyribonucleotide)n-3'-hydroxyl + 5'-phospho-(deoxyribonucleotide)m = (deoxyribonucleotide)n+m + AMP + beta-nicotinamide D-nucleotide.. In terms of biological role, DNA ligase that catalyzes the formation of phosphodiester linkages between 5'-phosphoryl and 3'-hydroxyl groups in double-stranded DNA using NAD as a coenzyme and as the energy source for the reaction. It is essential for DNA replication and repair of damaged DNA. The chain is DNA ligase from Roseobacter denitrificans (strain ATCC 33942 / OCh 114) (Erythrobacter sp. (strain OCh 114)).